The following is a 124-amino-acid chain: uncharacterized protein (124 aa).

Positions 1 to 28 are disordered; sequence MGTSLRSQSFREPRPSYGRLHESQGRSL. Positions 9-28 are enriched in basic and acidic residues; sequence SFREPRPSYGRLHESQGRSL.

This is an uncharacterized protein from Mus musculus (Mouse).